We begin with the raw amino-acid sequence, 105 residues long: uncharacterized protein (105 aa).

2 disordered regions span residues 29–55 (HTRVGVTDPDPRVPPLLPGPAGVTDES) and 72–105 (EQRGDRRAVRCEPAGEPPLDDVRTPAAPAVRSGR). The segment covering 72-81 (EQRGDRRAVR) has biased composition (basic and acidic residues).

This is an uncharacterized protein from Streptomyces coelicolor (strain ATCC BAA-471 / A3(2) / M145).